A 239-amino-acid polypeptide reads, in one-letter code: Orotidine 5'-phosphate decarboxylase (239 aa).

Substrate is bound by residues aspartate 10, lysine 33, 60-69 (DLKLYDIPNT), threonine 124, arginine 186, glutamine 195, glycine 215, and arginine 216. Catalysis depends on lysine 62, which acts as the Proton donor.

This sequence belongs to the OMP decarboxylase family. Type 1 subfamily. Homodimer.

It carries out the reaction orotidine 5'-phosphate + H(+) = UMP + CO2. Its pathway is pyrimidine metabolism; UMP biosynthesis via de novo pathway; UMP from orotate: step 2/2. In terms of biological role, catalyzes the decarboxylation of orotidine 5'-monophosphate (OMP) to uridine 5'-monophosphate (UMP). This is Orotidine 5'-phosphate decarboxylase from Latilactobacillus sakei subsp. sakei (strain 23K) (Lactobacillus sakei subsp. sakei).